Here is a 221-residue protein sequence, read N- to C-terminus: Glutathione S-transferase 1 (221 aa).

Residues 7–88 (QKMQLYSFSL…YLEEKFPENP (82 aa)) form the GST N-terminal domain. Glutathione is bound by residues 17-22 (SSCAWR), V60, 72-73 (DS), Q112, and 116-118 (NLA). Residues 93–221 (DLQKRALNYQ…ISPMLDEAKS (129 aa)) form the GST C-terminal domain.

Belongs to the GST superfamily. Zeta family.

The catalysed reaction is RX + glutathione = an S-substituted glutathione + a halide anion + H(+). In terms of biological role, conjugation of reduced glutathione to a wide number of exogenous and endogenous hydrophobic electrophiles. The sequence is that of Glutathione S-transferase 1 (GST1) from Dianthus caryophyllus (Carnation).